The chain runs to 325 residues: Ribonuclease Z (325 aa).

Residues H63, H65, D67, H68, H147, D218, and H276 each contribute to the Zn(2+) site. D67 acts as the Proton acceptor in catalysis.

This sequence belongs to the RNase Z family. Homodimer. Zn(2+) serves as cofactor.

The enzyme catalyses Endonucleolytic cleavage of RNA, removing extra 3' nucleotides from tRNA precursor, generating 3' termini of tRNAs. A 3'-hydroxy group is left at the tRNA terminus and a 5'-phosphoryl group is left at the trailer molecule.. Zinc phosphodiesterase, which displays some tRNA 3'-processing endonuclease activity. Probably involved in tRNA maturation, by removing a 3'-trailer from precursor tRNA. The chain is Ribonuclease Z from Oenococcus oeni (strain ATCC BAA-331 / PSU-1).